A 495-amino-acid chain; its full sequence is B3 domain-containing protein Os01g0234100 (495 aa).

Disordered stretches follow at residues 1 to 25 (MAID…KMEQ) and 88 to 108 (PGIP…NTTE). The span at 92-108 (QTCNTQNTSNGRTNTTE) shows a compositional bias: polar residues. The segment at residues 152 to 243 (FVKHMLHSHV…KFKVHIIRDK (92 aa)) is a DNA-binding region (TF-B3). Over residues 268–282 (EATDNATKPKEDPET) the composition is skewed to basic and acidic residues. Residues 268 to 289 (EATDNATKPKEDPETTRVSSKV) are disordered.

Its subcellular location is the nucleus. The polypeptide is B3 domain-containing protein Os01g0234100 (Oryza sativa subsp. japonica (Rice)).